We begin with the raw amino-acid sequence, 460 residues long: Amino acid transporter AVT6A (460 aa).

11 helical membrane passes run 45–65, 66–86, 120–140, 172–192, 199–219, 238–258, 281–301, 336–356, 371–391, 394–414, and 427–447; these read FSGA…MALP, ATMK…MAFL, ILLQ…YMII, AAIL…FKRI, SALS…ISIM, LTSF…FICH, ALML…LLFG, LMLV…GLLF, CLTA…PSIW, FQFT…ASII, and TTLA…AIYS.

Belongs to the amino acid/polyamine transporter 2 family. Amino acid/auxin permease (AAAP) (TC 2.A.18.6) subfamily.

The protein localises to the membrane. The sequence is that of Amino acid transporter AVT6A from Arabidopsis thaliana (Mouse-ear cress).